We begin with the raw amino-acid sequence, 303 residues long: DDRGK domain-containing protein 1 (303 aa).

At 1–2 (MD) the chain is on the lumenal side. The chain crosses the membrane as a helical span at residues 3 to 23 (LILLIGIATALLIILLTLYFL). Topologically, residues 24–303 (QKRNAPAETK…TPVTASEGGA (280 aa)) are cytoplasmic. Disordered stretches follow at residues 31–53 (ETKA…VPRR) and 84–160 (AIDP…AEVE). Positions 106–160 (LDEKMGAKKRAKMEAKEQKRLQREQELHDREQRKVKEAKEEAERKQQDDLDAEVE) are enriched in basic and acidic residues.

The protein belongs to the DDRGK1 family. Interacts with Atg9; the interaction is transient.

The protein resides in the endoplasmic reticulum membrane. Substrate adapter for ufmylation, the covalent attachment of the ubiquitin-like modifier UFM1 to substrate proteins. Required for ufmylation of Atg9; protects the nervous system during aging, possibly by stabilizing Atg9 and supporting its function. The sequence is that of DDRGK domain-containing protein 1 from Drosophila grimshawi (Hawaiian fruit fly).